The chain runs to 537 residues: O-phosphoserine--tRNA(Cys) ligase (537 aa).

Residues 186–188, 231–233, 273–274, and Asn-317 each bind substrate; these read HMT, SAS, and YY.

The protein belongs to the class-II aminoacyl-tRNA synthetase family. O-phosphoseryl-tRNA(Cys) synthetase subfamily. In terms of assembly, homotetramer. Interacts with SepCysS.

The catalysed reaction is tRNA(Cys) + O-phospho-L-serine + ATP = O-phospho-L-seryl-tRNA(Cys) + AMP + diphosphate. Catalyzes the attachment of O-phosphoserine (Sep) to tRNA(Cys). This chain is O-phosphoserine--tRNA(Cys) ligase, found in Methanococcus maripaludis (strain C6 / ATCC BAA-1332).